Here is a 685-residue protein sequence, read N- to C-terminus: Class E vacuolar protein-sorting machinery protein HSE1 (685 aa).

The 131-residue stretch at 18–148 (ATDENLTTEN…ELSRKKPDLK (131 aa)) folds into the VHS domain. The segment covering 144-166 (KPDLKAPAKPEKHKITEQERQRE) has biased composition (basic and acidic residues). 2 disordered regions span residues 144–168 (KPDL…REEE) and 182–247 (NTSG…DPTP). One can recognise a UIM domain in the interval 165-184 (REEEELQMVLALSLSETNTS). Over residues 182–206 (NTSGSFQQHHQTNSQIQPPVNNSHF) the composition is skewed to polar residues. Residues 212–241 (QQQQQQQQQHNQQDYGQQSNNANTNNNAPA) show a composition bias toward low complexity. The SH3 domain maps to 250 to 309 (ATVSRVKALYDLNATEPGELSFRKGDIITVLESVFRDWWRGSLRGQVGIFPLNYVMPIAE). Composition is skewed to low complexity over residues 432–448 (AQGA…TPGT) and 457–498 (PQQQ…PVHQ). A disordered region spans residues 432–685 (AQGAPAGYPG…AGPPPSNFYE (254 aa)). The span at 499–522 (YDNTQAHGRQGSTDSGRSQRMYSQ) shows a compositional bias: polar residues. 2 stretches are compositionally biased toward gly residues: residues 539-553 (GGSG…GGGA) and 562-572 (GGAGGPGGPGG). 2 stretches are compositionally biased toward low complexity: residues 574-584 (SAPSGAHSGAP) and 591-604 (APAA…GSPS). Over residues 627-645 (INGTPTSNLGQQSPVTSQS) the composition is skewed to polar residues. Residues 646–658 (IPIPNNNNLAAPP) show a composition bias toward low complexity. The segment covering 668–685 (SPPPPVPNAGPPPSNFYE) has biased composition (pro residues).

It belongs to the STAM family. In terms of assembly, component of the ESCRT-0 complex composed of HSE1 and VPS27.

The protein resides in the endosome membrane. Its function is as follows. Component of the ESCRT-0 complex which is the sorting receptor for ubiquitinated cargo proteins at the multivesicular body (MVB). The chain is Class E vacuolar protein-sorting machinery protein HSE1 (HSE1) from Yarrowia lipolytica (strain CLIB 122 / E 150) (Yeast).